We begin with the raw amino-acid sequence, 1805 residues long: Kinesin-like protein KIF13A (1805 aa).

A Kinesin motor domain is found at lysine 5 to isoleucine 352. Glycine 102–serine 109 lines the ATP pocket. Residues asparagine 359–glutamate 436 adopt a coiled-coil conformation. Residues histidine 469–valine 519 form the FHA domain. Over residues glutamate 556–aspartate 567 the composition is skewed to basic and acidic residues. Disordered regions lie at residues glutamate 556–glutamate 575 and glutamine 633–alanine 656. 2 coiled-coil regions span residues valine 602–lysine 775 and aspartate 1100–valine 1138. At serine 636 the chain carries Phosphoserine. Serine 1287 carries the post-translational modification Phosphoserine. Residues threonine 1385–proline 1396 show a composition bias toward polar residues. The tract at residues threonine 1385–aspartate 1404 is disordered. Serine 1454, isoleucine 1481, serine 1490, and methionine 1494 each carry phosphoserine. Residues proline 1507–glutamate 1531 form a disordered region. Residues glutamate 1518–glutamine 1547 adopt a coiled-coil conformation. Residues histidine 1519–aspartate 1528 show a composition bias toward basic and acidic residues. Residues serine 1529 and serine 1572 each carry the phosphoserine modification. Residues methionine 1612–aspartate 1621 show a composition bias toward low complexity. The disordered stretch occupies residues methionine 1612–arginine 1645. 2 positions are modified to phosphoserine: serine 1648 and serine 1698. The segment at glycine 1749 to histidine 1779 is disordered. Polar residues predominate over residues threonine 1751 to lysine 1771.

It belongs to the TRAFAC class myosin-kinesin ATPase superfamily. Kinesin family. Interacts with AP2B1. Interacts with ZFYVE26. Interacts with AP1G1 and AP1G2. In terms of tissue distribution, widely expressed, with highest levels in heart, brain and skeletal muscle.

Its subcellular location is the cytoplasm. It is found in the cytoskeleton. It localises to the microtubule organizing center. The protein resides in the centrosome. The protein localises to the midbody. Its subcellular location is the endosome membrane. It is found in the golgi apparatus membrane. Its function is as follows. Plus end-directed microtubule-dependent motor protein involved in intracellular transport and regulating various processes such as mannose-6-phosphate receptor (M6PR) transport to the plasma membrane, endosomal sorting during melanosome biogenesis and cytokinesis. Mediates the transport of M6PR-containing vesicles from trans-Golgi network to the plasma membrane via direct interaction with the AP-1 complex. During melanosome maturation, required for delivering melanogenic enzymes from recycling endosomes to nascent melanosomes by creating peripheral recycling endosomal subdomains in melanocytes. Also required for the abscission step in cytokinesis: mediates translocation of ZFYVE26, and possibly TTC19, to the midbody during cytokinesis. The sequence is that of Kinesin-like protein KIF13A (KIF13A) from Homo sapiens (Human).